The chain runs to 797 residues: MAAAPAAAGAGASRGRRLAATAAAWGGWGGRPRPGNILLQLRQGQLTGRGLVRAVQFTETFLTERDKLSKWSGIPQLLLKLYATSHLHSDFVECQSILKEISPLLSMEAMAFVTEDRKFTQEATYPNTYIFDLFGGVDLLVEILMRPTISIRGQKLKISDEMSKDCLSILYNTCVCTEGVTKRLAEKNDFVIFLFTLMTSKKTFLQTATLIEDILGVKKEMIRLDEVPNLSSLVSNFDQQQLANFCRILAVTISEMDTGNDDKHTLLAKNAQQKKSLSLGPSAAEINQAALLSIPGFVERLCKLATRKVSESTGTASFLQELEEWYTWLDNALVLDALMRVANEESEHNQAPTVFPSLGTSEEGGLPHTSARAQLPQSMKIMHEIMYKLEVLYVLCVLLMGRQRNQVHRMIAEFKLIPGLNNLFDKLIWRKHSASALVLHGHNQNCDCSPDITLKIQFLRLLQSFSDHHENKYLLLNNQELNELSAISLKANIPEVEAVLNTDRSLVCDGKRGLLTRLLQVMKKEPAESSFRFWQARAVESFLRGTTSYADQMFLLKRGLLEHILYCIVDSECKSRDVLQSYFDLLGELMKFNVDAFKRFNKYINTDAKFQVFLKQINSSLVDSNMLVRCVTLSLDRFENQVDMKVAEVLSECRLLAYISQVPTQMSFLFRLINIIHVQTLTQENVSCLNTSLVILMLARRKERLPLYLRLLQRMEHSKKYPGFLLNNFHNLLRFWQQHYLHKDKDSTCLENSSCISFSYWKETVSILLNPDRQSPSALVSYIEEPYMDIDRDFTEE.

N-acetylalanine is present on Ala2. The interval 2–400 (AAAPAAAGAG…VLYVLCVLLM (399 aa)) is interaction with TNFRSF1A.

Component of the DCX(TRPC4AP) E3 ubiquitin ligase complex, at least composed of CUL4A, DDB1, TRPC4AP/TRUSS and RBX1. Interacts with MYC. Constitutively associated with TNFRSF1A. Directly interacts with TRADD, TRAF2, CHUK, IKBKB and IKBKG. Interacts with TRPC1, TRPC4 and TRPC5. Phosphorylated by GSK3B; phosphorylation is required for ubiquitination. Post-translationally, ubiquitinated by a SCF (SKP1-CUL1-F-box protein) E3 ubiquitin-protein ligase containing SKP2, leading to its degradation. Phosphorylation by GSK3B is required for ubiquitination. As to expression, widely expressed, with high levels in heart, liver and testis.

The protein resides in the cytoplasm. It is found in the perinuclear region. Its pathway is protein modification; protein ubiquitination. Substrate-recognition component of a DCX (DDB1-CUL4-X-box) E3 ubiquitin-protein ligase complex required for cell cycle control. The DCX(TRPC4AP) complex specifically mediates the polyubiquitination and subsequent degradation of MYC as part of the DesCEND (destruction via C-end degrons) pathway. The DesCEND (destruction via C-end degrons) pathway recognizes a C-degron located at the extreme C terminus of target proteins, leading to their ubiquitination and degradation. The DCX(TRPC4AP) complex specifically recognizes proteins with an arginine at the minus 3 position (R-3 motif) at the C-terminus, such as MYC, leading to their ubiquitination and degradation. Also participates in the activation of NFKB1 in response to ligation of TNFRSF1A, possibly by linking TNFRSF1A to the IKK signalosome. Involved in JNK activation via its interaction with TRAF2. Also involved in elevation of endoplasmic reticulum Ca(2+) storage reduction in response to CHRM1. This chain is Short transient receptor potential channel 4-associated protein, found in Mus musculus (Mouse).